The sequence spans 934 residues: Serine/threonine-protein kinase KIPK1 (934 aa).

Disordered stretches follow at residues 20–40 (LPKH…KDLV), 70–113 (RLMS…RFVG), 189–227 (PLMP…FGLQ), 305–343 (SSSA…RPKQ), 395–438 (SIDD…SCNV), and 466–493 (EKET…DYSR). Polar residues-rich tracts occupy residues 82-94 (SASA…TSPS) and 212-227 (NPIS…FGLQ). Residues 395–421 (SIDDNPPSYTSSHNPKICTDSLSSVSN) show a composition bias toward polar residues. The 342-residue stretch at 538–879 (FNLLKKLGCG…SVEIKRHPFF (342 aa)) folds into the Protein kinase domain. ATP contacts are provided by residues 544–552 (LGCGDIGTV) and K567. Residue D663 is the Proton acceptor of the active site. The interval 738–773 (SSNQQQGRKPKRGDHLSKTQQHLSRSLPQLVAEPTE) is disordered. A compositionally biased stretch (polar residues) spans 755 to 764 (KTQQHLSRSL).

The protein belongs to the protein kinase superfamily. Ser/Thr protein kinase family. In terms of assembly, interacts with KCBP. Interacts with PERK8, PERK9, PERK10 and PERK13. Autophosphorylated. In terms of tissue distribution, expressed in roots, cauline leaves, flowers and siliques.

Its subcellular location is the cytoplasm. The protein resides in the nucleus. The enzyme catalyses L-seryl-[protein] + ATP = O-phospho-L-seryl-[protein] + ADP + H(+). It catalyses the reaction L-threonyl-[protein] + ATP = O-phospho-L-threonyl-[protein] + ADP + H(+). In terms of biological role, could be involved in the negative regulation of root growth. The protein is Serine/threonine-protein kinase KIPK1 of Arabidopsis thaliana (Mouse-ear cress).